The primary structure comprises 1571 residues: Pentafunctional AROM polypeptide (1571 aa).

Positions 1–384 (MEQPTTIQIL…HEQKASVVSN (384 aa)) are 3-dehydroquinate synthase. NAD(+) is bound by residues 44–46 (DTN), 81–84 (ESSK), 114–116 (GGV), and Asp119. Residue Arg130 participates in 7-phospho-2-dehydro-3-deoxy-D-arabino-heptonate binding. Position 139-140 (139-140 (TT)) interacts with NAD(+). 7-phospho-2-dehydro-3-deoxy-D-arabino-heptonate is bound by residues Asp146 and Lys152. Lys161 lines the NAD(+) pocket. A 7-phospho-2-dehydro-3-deoxy-D-arabino-heptonate-binding site is contributed by Asn162. Residues 179 to 182 (FLNT) and Asn190 contribute to the NAD(+) site. Glu194 lines the Zn(2+) pocket. Residues 194–197 (EVIK) and Lys250 each bind 7-phospho-2-dehydro-3-deoxy-D-arabino-heptonate. The Proton acceptor; for 3-dehydroquinate synthase activity role is filled by Glu260. 7-phospho-2-dehydro-3-deoxy-D-arabino-heptonate is bound by residues 264–268 (RNLLN) and His271. His271 contacts Zn(2+). His275 acts as the Proton acceptor; for 3-dehydroquinate synthase activity in catalysis. 7-phospho-2-dehydro-3-deoxy-D-arabino-heptonate is bound by residues His287 and Lys356. His287 contacts Zn(2+). The interval 397 to 843 (VLPGIPKPLN…WDALAQTFKV (447 aa)) is EPSP synthase. The active-site For EPSP synthase activity is Cys825. A shikimate kinase region spans residues 866-1057 (ASIFIIGMRG…KKKDHSFFVS (192 aa)). Residue 872–879 (GMRGAGKT) participates in ATP binding. The segment at 1058-1278 (LTLPDLQLSA…AAPGQVSAKD (221 aa)) is 3-dehydroquinase. His1181 functions as the Proton acceptor; for 3-dehydroquinate dehydratase activity in the catalytic mechanism. Lys1209 acts as the Schiff-base intermediate with substrate; for 3-dehydroquinate dehydratase activity in catalysis. Residues 1291 to 1571 (AKKFALFGKP…EDARAAVMNI (281 aa)) form a shikimate dehydrogenase region.

This sequence in the N-terminal section; belongs to the sugar phosphate cyclases superfamily. Dehydroquinate synthase family. The protein in the 2nd section; belongs to the EPSP synthase family. In the 3rd section; belongs to the shikimate kinase family. It in the 4th section; belongs to the type-I 3-dehydroquinase family. This sequence in the C-terminal section; belongs to the shikimate dehydrogenase family. Homodimer. The cofactor is Zn(2+).

The protein resides in the cytoplasm. It catalyses the reaction 7-phospho-2-dehydro-3-deoxy-D-arabino-heptonate = 3-dehydroquinate + phosphate. The catalysed reaction is 3-dehydroquinate = 3-dehydroshikimate + H2O. It carries out the reaction shikimate + NADP(+) = 3-dehydroshikimate + NADPH + H(+). The enzyme catalyses shikimate + ATP = 3-phosphoshikimate + ADP + H(+). It catalyses the reaction 3-phosphoshikimate + phosphoenolpyruvate = 5-O-(1-carboxyvinyl)-3-phosphoshikimate + phosphate. It participates in metabolic intermediate biosynthesis; chorismate biosynthesis; chorismate from D-erythrose 4-phosphate and phosphoenolpyruvate: step 2/7. The protein operates within metabolic intermediate biosynthesis; chorismate biosynthesis; chorismate from D-erythrose 4-phosphate and phosphoenolpyruvate: step 3/7. Its pathway is metabolic intermediate biosynthesis; chorismate biosynthesis; chorismate from D-erythrose 4-phosphate and phosphoenolpyruvate: step 4/7. It functions in the pathway metabolic intermediate biosynthesis; chorismate biosynthesis; chorismate from D-erythrose 4-phosphate and phosphoenolpyruvate: step 5/7. It participates in metabolic intermediate biosynthesis; chorismate biosynthesis; chorismate from D-erythrose 4-phosphate and phosphoenolpyruvate: step 6/7. In terms of biological role, the AROM polypeptide catalyzes 5 consecutive enzymatic reactions in prechorismate polyaromatic amino acid biosynthesis. The sequence is that of Pentafunctional AROM polypeptide from Arthroderma otae (strain ATCC MYA-4605 / CBS 113480) (Microsporum canis).